The following is a 925-amino-acid chain: Coronin-7 (925 aa).

WD repeat units follow at residues 75 to 115, 124 to 163, 166 to 205, and 209 to 253; these read CHSD…QALP, PEDL…PLTE, AHGD…QASQ, and AHEN…SALA. 2 disordered regions span residues 196-216 and 399-465; these read DPRT…SRDS and LVPP…SLQS. A compositionally biased stretch (polar residues) spans 201 to 210; that stretch reads PQASQSTQAH. Low complexity predominate over residues 429–460; sequence SSPPSSLTSPSTPSSLGPTLSSTSGIGTGPSL. Phosphoserine is present on residues serine 462 and serine 465. Lysine 472 participates in a covalent cross-link: Glycyl lysine isopeptide (Lys-Gly) (interchain with G-Cter in ubiquitin). 3 WD repeats span residues 542–582, 592–632, and 635–674; these read QNGA…LEEV, GHME…DRLK, and GHQD…EPLQ. A Glycyl lysine isopeptide (Lys-Gly) (interchain with G-Cter in ubiquitin) cross-link involves residue lysine 680. The WD 8 repeat unit spans residues 728–768; the sequence is DVAPSTLVPSYEPRHWPGAPDWQGDARVFLYELLPESPFFM. The disordered stretch occupies residues 857–925; the sequence is LQPPDMSPVS…FEGVDEDEWD (69 aa). The segment covering 866–882 has biased composition (low complexity); that stretch reads SQAPREAPARRAPSSAQ. A compositionally biased stretch (basic and acidic residues) spans 884 to 896; the sequence is LEEKSDQQKKEEL. Serine 915 carries the phosphoserine modification.

The protein belongs to the WD repeat coronin family. In terms of assembly, interacts with clathrin adapter AP1 complex. This interaction takes place at Golgi membranes and not AP1-positive endosomal membranes. Interacts (when ubiquitinated at Lys-472) with EPS15. Post-translationally, the membrane-associated form is phosphorylated on tyrosine residues. In terms of processing, ubiquitinated via 'Lys-33'-linked ubiquitin chains by the BCR(KLHL20) E3 ubiquitin ligase complex: 'Lys-33'-linked ubiquitination promotes interaction with EPS15 and facilitates actin polymerization at the trans-Golgi network, thereby facilitating post-Golgi trafficking. Deubiquitinated by ZRANB1/TRABID.

The protein resides in the golgi apparatus membrane. Its subcellular location is the golgi apparatus. It is found in the trans-Golgi network. It localises to the cytoplasmic vesicle. The protein localises to the cytoplasm. The protein resides in the cytosol. F-actin regulator involved in anterograde Golgi to endosome transport: upon ubiquitination via 'Lys-33'-linked ubiquitin chains by the BCR(KLHL20) E3 ubiquitin ligase complex, interacts with EPS15 and localizes to the trans-Golgi network, where it promotes actin polymerization, thereby facilitating post-Golgi trafficking. May play a role in the maintenance of the Golgi apparatus morphology. The sequence is that of Coronin-7 (CORO7) from Pongo abelii (Sumatran orangutan).